The following is a 202-amino-acid chain: Probable GTP-binding protein EngB (202 aa).

The region spanning 22–197 (VFPEYAFIGR…LDYIENISKE (176 aa)) is the EngB-type G domain. GTP contacts are provided by residues 30–37 (GRSNVGKS), 57–61 (GKTML), 75–78 (DLPG), 142–145 (TKAD), and 173–178 (YFISSS). Ser-37 and Thr-59 together coordinate Mg(2+).

This sequence belongs to the TRAFAC class TrmE-Era-EngA-EngB-Septin-like GTPase superfamily. EngB GTPase family. Requires Mg(2+) as cofactor.

Necessary for normal cell division and for the maintenance of normal septation. The protein is Probable GTP-binding protein EngB of Bacteroides thetaiotaomicron (strain ATCC 29148 / DSM 2079 / JCM 5827 / CCUG 10774 / NCTC 10582 / VPI-5482 / E50).